Reading from the N-terminus, the 332-residue chain is Alpha/beta hydrolase domain-containing protein aho-3 (332 aa).

Residues 1–15 (MSSGAPSGSSMSSTP) show a composition bias toward low complexity. The interval 1 to 24 (MSSGAPSGSSMSSTPGSPPPRAGG) is disordered. Residues Ser-191, Asp-256, and His-285 each act as charge relay system in the active site.

It belongs to the AB hydrolase superfamily. ABHD17 family. Post-translationally, palmitoylated on cysteine residues located in a cysteine cluster at the N-terminus which promotes membrane localization and localization to sensory neuron endings. In terms of tissue distribution, expressed in a subset of neurons including AIY, HSN, ADF, AFD, AWC, AWB and NSM, hypodermis, pharyngeal muscle and intestine.

It localises to the cell membrane. The protein localises to the cytoplasmic vesicle membrane. It catalyses the reaction S-hexadecanoyl-L-cysteinyl-[protein] + H2O = L-cysteinyl-[protein] + hexadecanoate + H(+). Its function is as follows. Hydrolyzes fatty acids from S-acylated cysteine residues in proteins. Acts in sensory neurons including AWC to regulate starvation-induced thermotaxis plasticity and salt learning behavior. This Caenorhabditis elegans protein is Alpha/beta hydrolase domain-containing protein aho-3.